The chain runs to 236 residues: Small ribosomal subunit protein uS2c (236 aa).

This sequence belongs to the universal ribosomal protein uS2 family.

Its subcellular location is the plastid. The protein localises to the chloroplast. The polypeptide is Small ribosomal subunit protein uS2c (rps2) (Ipomoea purpurea (Common morning glory)).